The sequence spans 708 residues: Leucine-rich repeat neuronal protein 3 (708 aa).

A signal peptide spans 1–22; that stretch reads MKDMPLRIHVLLGLAITTLVQA. Positions 23-69 constitute an LRRNT domain; the sequence is VDKKVDCPRLCTCEIRPWFTPRSIYMEASTVDCNDLGLLTFPARLPA. Residues 23–628 are Extracellular-facing; the sequence is VDKKVDCPRL…KEYEKNNTTT (606 aa). LRR repeat units follow at residues 70-91, 93-114, 117-138, 141-162, 165-186, 189-210, 213-234, 237-258, 261-282, 285-304, 310-332, and 335-358; these read NTQI…TDFP, NLTG…NVKK, QLLS…CLSE, NLQE…AFIG, NLLR…WFDA, NLEI…NFKP, NLRS…ALVG, NLES…ALQK, NLKF…DFSN, HLKE…DSLA, DLRK…AFFR, and KLES…ESLP. Asn93 and Asn103 each carry an N-linked (GlcNAc...) asparagine glycan. Asn223 carries an N-linked (GlcNAc...) asparagine glycan. In terms of domain architecture, LRRCT spans 368 to 421; it reads NPIRCDCVIRWMNMNKTNIRFMEPDSLFCVDPPEFQGQNVRQVHFRDMMEICLP. An N-linked (GlcNAc...) asparagine glycan is attached at Asn382. In terms of domain architecture, Ig-like C2-type spans 421–514; that stretch reads PLIAPESFPS…DLKSVMIKVD (94 aa). Cys444 and Cys496 are disulfide-bonded. Residues Asn522, Asn579, Asn608, Asn624, and Asn625 are each glycosylated (N-linked (GlcNAc...) asparagine). The region spanning 523–617 is the Fibronectin type-III domain; that stretch reads GSLNIKIRDI…NVTTKGLHPD (95 aa). The chain crosses the membrane as a helical span at residues 629–649; sequence LMACLGGLLGIIGVICLISCL. The Cytoplasmic portion of the chain corresponds to 650–708; sequence SPEMNCDGGHSYVRNYLQKPTFALGELYPPLINLWEAGKEKSTSLKVKATVIGLPTNMS.

The protein resides in the membrane. The chain is Leucine-rich repeat neuronal protein 3 (LRRN3) from Homo sapiens (Human).